The following is a 397-amino-acid chain: 1-deoxy-D-xylulose 5-phosphate reductoisomerase (397 aa).

NADPH contacts are provided by serine 10, glycine 11, serine 12, isoleucine 13, alanine 36, arginine 37, and asparagine 124. Residue lysine 125 participates in 1-deoxy-D-xylulose 5-phosphate binding. Position 126 (glutamate 126) interacts with NADPH. Aspartate 150 lines the Mn(2+) pocket. Positions 151, 152, 186, and 209 each coordinate 1-deoxy-D-xylulose 5-phosphate. Glutamate 152 provides a ligand contact to Mn(2+). Residue glycine 215 participates in NADPH binding. The 1-deoxy-D-xylulose 5-phosphate site is built by serine 222, asparagine 227, lysine 228, and glutamate 231. Residue glutamate 231 coordinates Mn(2+).

It belongs to the DXR family. It depends on Mg(2+) as a cofactor. Mn(2+) is required as a cofactor.

It catalyses the reaction 2-C-methyl-D-erythritol 4-phosphate + NADP(+) = 1-deoxy-D-xylulose 5-phosphate + NADPH + H(+). The protein operates within isoprenoid biosynthesis; isopentenyl diphosphate biosynthesis via DXP pathway; isopentenyl diphosphate from 1-deoxy-D-xylulose 5-phosphate: step 1/6. Catalyzes the NADPH-dependent rearrangement and reduction of 1-deoxy-D-xylulose-5-phosphate (DXP) to 2-C-methyl-D-erythritol 4-phosphate (MEP). This Aeromonas hydrophila subsp. hydrophila (strain ATCC 7966 / DSM 30187 / BCRC 13018 / CCUG 14551 / JCM 1027 / KCTC 2358 / NCIMB 9240 / NCTC 8049) protein is 1-deoxy-D-xylulose 5-phosphate reductoisomerase.